Here is a 283-residue protein sequence, read N- to C-terminus: ATP phosphoribosyltransferase (283 aa).

It belongs to the ATP phosphoribosyltransferase family. Long subfamily. As to quaternary structure, equilibrium between an active dimeric form, an inactive hexameric form and higher aggregates. Interconversion between the various forms is largely reversible and is influenced by the natural substrates and inhibitors of the enzyme. It depends on Mg(2+) as a cofactor.

Its subcellular location is the cytoplasm. The enzyme catalyses 1-(5-phospho-beta-D-ribosyl)-ATP + diphosphate = 5-phospho-alpha-D-ribose 1-diphosphate + ATP. Its pathway is amino-acid biosynthesis; L-histidine biosynthesis; L-histidine from 5-phospho-alpha-D-ribose 1-diphosphate: step 1/9. Its activity is regulated as follows. Feedback inhibited by histidine. Its function is as follows. Catalyzes the condensation of ATP and 5-phosphoribose 1-diphosphate to form N'-(5'-phosphoribosyl)-ATP (PR-ATP). Has a crucial role in the pathway because the rate of histidine biosynthesis seems to be controlled primarily by regulation of HisG enzymatic activity. In Mycobacterium sp. (strain JLS), this protein is ATP phosphoribosyltransferase.